A 97-amino-acid polypeptide reads, in one-letter code: Large ribosomal subunit protein eL21 (97 aa).

The interval 1–24 is disordered; sequence MQKSEGFRSKTRYKLQKHPRQKGM. A compositionally biased stretch (basic residues) spans 9-21; it reads SKTRYKLQKHPRQ.

Belongs to the eukaryotic ribosomal protein eL21 family.

The sequence is that of Large ribosomal subunit protein eL21 from Methanococcus maripaludis (strain DSM 14266 / JCM 13030 / NBRC 101832 / S2 / LL).